A 180-amino-acid chain; its full sequence is Putative manganese efflux pump MntP (180 aa).

The next 5 membrane-spanning stretches (helical) occupy residues 6 to 26 (VLLLAGALGTDAFSLCLGLGL), 33 to 53 (MAWMLVGLIVALHVVLPVAGW), 63 to 83 (VGRWAAYLGAAILFYLGVKMV), 101 to 121 (GFLGLTVLAGSVSMDALSVGF), and 130 to 150 (LLLTAGVIGLVAGLMSAAAFV).

The protein belongs to the MntP (TC 9.B.29) family.

The protein localises to the cell membrane. Probably functions as a manganese efflux pump. In Desulforudis audaxviator (strain MP104C), this protein is Putative manganese efflux pump MntP.